Consider the following 934-residue polypeptide: Rab GTPase-activating protein tbc-11 (934 aa).

In terms of domain architecture, PID spans 16–134 (VQYLGCSQLV…SKAETAAKAL (119 aa)). A disordered region spans residues 337–383 (FISLESDSDRKRSKQNLGKSPSRMPTQLLHPTGDDESDCDEPLLSGS). A compositionally biased stretch (polar residues) spans 351–361 (QNLGKSPSRMP). In terms of domain architecture, Rab-GAP TBC spans 422–612 (GIPDKLRGRV…FILDLFLSQG (191 aa)). Coiled coils occupy residues 727-800 (KIEL…YKKL) and 861-895 (LEEREDHIKNLEIDLAQTKLSLVEAECRNQDLTHQ).

In terms of biological role, rab GTPase activating protein for the small GTPases rab-6.1 and rab-6.2. Probably acts through rab-6.1 and rab-6.2 to play a role in microRNA-mediated gene silencing in different tissue types. Required for seam cell division and alae formation. This Caenorhabditis elegans protein is Rab GTPase-activating protein tbc-11.